A 349-amino-acid chain; its full sequence is Protein DMR6-LIKE OXYGENASE 1 (349 aa).

The Fe2OG dioxygenase domain occupies 197–296; sequence HAQHMAFNYY…RLSIPTFYFP (100 aa). Y206 is a 2-oxoglutarate binding site. Positions 221, 223, and 277 each coordinate Fe cation. 2-oxoglutarate-binding residues include R287 and S289.

Belongs to the iron/ascorbate-dependent oxidoreductase family. Requires L-ascorbate as cofactor. Fe(2+) is required as a cofactor.

The catalysed reaction is salicylate + NADH + O2 + H(+) = 2,3-dihydroxybenzoate + NAD(+) + H2O. Converts salicylic acid (SA) to both 2,3-dihydroxybenzoic acid (2,3-DHBA) and 2,5-DHBA in vitro but only 2,3-DHBA in vivo. Component of a negative feedback regulation system of SA levels during senescence. Regulates both onset and progression of leaf senescence. Negative regulator of defense against Hyaloperonospora arabidopsidis. Functionally, (Microbial infection) Confers susceptibility to the downy mildew pathogen Hyaloperonospora arabidopsidis. The protein is Protein DMR6-LIKE OXYGENASE 1 of Arabidopsis thaliana (Mouse-ear cress).